Reading from the N-terminus, the 678-residue chain is UvrABC system protein C (678 aa).

The GIY-YIG domain occupies 16-95; that stretch reads VEPGVYRFRD…IKEFDPRFNI (80 aa). Residues 208 to 243 form the UVR domain; it reads DRLIREMEQQMTAAAEDLDFERAARLRDNIGAMRRA. Over residues 649 to 667 the composition is skewed to low complexity; the sequence is EAPPEPGAEAPPDSGAAAA. Positions 649-678 are disordered; sequence EAPPEPGAEAPPDSGAAAAVMGNDQSRVPG.

Belongs to the UvrC family. As to quaternary structure, interacts with UvrB in an incision complex.

Its subcellular location is the cytoplasm. In terms of biological role, the UvrABC repair system catalyzes the recognition and processing of DNA lesions. UvrC both incises the 5' and 3' sides of the lesion. The N-terminal half is responsible for the 3' incision and the C-terminal half is responsible for the 5' incision. In Mycolicibacterium gilvum (strain PYR-GCK) (Mycobacterium gilvum (strain PYR-GCK)), this protein is UvrABC system protein C.